The following is a 115-amino-acid chain: UPF0597 protein HI_0855 (115 aa).

Belongs to the UPF0597 family.

The protein is UPF0597 protein HI_0855 of Haemophilus influenzae (strain ATCC 51907 / DSM 11121 / KW20 / Rd).